The primary structure comprises 49 residues: Large ribosomal subunit protein bL33 (49 aa).

This sequence belongs to the bacterial ribosomal protein bL33 family.

This is Large ribosomal subunit protein bL33 from Clostridium acetobutylicum (strain ATCC 824 / DSM 792 / JCM 1419 / IAM 19013 / LMG 5710 / NBRC 13948 / NRRL B-527 / VKM B-1787 / 2291 / W).